The chain runs to 295 residues: MSVKHFIQITKPGIIFGNVLSVAGGFFLASKGHVDFALFLAVVIGTSLVVASGCVFNNCIDRDIDIKMERTKNRVMVQGGMSLTLALVYATLLGVAGFSLLYVQANPLSAFCALIGFIVYVGFYSLWLKRKSVHGTLVGSLSGAMPPVIGYCAVSNSFDLAAVTLLVMFSLWQMPHSFAIAIFRFKDYSAANIPVLPVARGILAAKKQIVLYVLAFVLATLMLTLGGYAGLGYLAVAAAMGLYWLYMAWGGYKAEDDSKWARKVFGFSILTVTALSVMMGVDSQTAADVLMTYAR.

The next 9 helical transmembrane spans lie at Ile9 to Ala29, Phe36 to Phe56, Leu83 to Val103, Leu108 to Leu128, Gly135 to Ser155, Val163 to Phe183, Ile209 to Ala229, Gly230 to Gly250, and Val264 to Gln284.

This sequence belongs to the UbiA prenyltransferase family. Protoheme IX farnesyltransferase subfamily.

It is found in the cell inner membrane. The enzyme catalyses heme b + (2E,6E)-farnesyl diphosphate + H2O = Fe(II)-heme o + diphosphate. It functions in the pathway porphyrin-containing compound metabolism; heme O biosynthesis; heme O from protoheme: step 1/1. In terms of biological role, converts heme B (protoheme IX) to heme O by substitution of the vinyl group on carbon 2 of heme B porphyrin ring with a hydroxyethyl farnesyl side group. The sequence is that of Protoheme IX farnesyltransferase 2 from Pseudomonas putida (strain W619).